We begin with the raw amino-acid sequence, 414 residues long: Esterase FrsA (414 aa).

This sequence belongs to the FrsA family.

The catalysed reaction is a carboxylic ester + H2O = an alcohol + a carboxylate + H(+). Its function is as follows. Catalyzes the hydrolysis of esters. The chain is Esterase FrsA from Escherichia coli O127:H6 (strain E2348/69 / EPEC).